The following is a 444-amino-acid chain: Argininosuccinate synthase (444 aa).

Residues 18-26 (AFSGGLDTS) and Ala44 each bind ATP. Position 100 (Tyr100) interacts with L-citrulline. ATP-binding residues include Gly130 and Thr132. 3 residues coordinate L-aspartate: Thr132, Asn136, and Asp137. Asn136 serves as a coordination point for L-citrulline. Position 137 (Asp137) interacts with ATP. L-citrulline is bound by residues Arg140 and Ser193. Asp195 lines the ATP pocket. Residues Thr202, Glu204, and Glu281 each contribute to the L-citrulline site.

It belongs to the argininosuccinate synthase family. Type 2 subfamily. In terms of assembly, homotetramer.

It localises to the cytoplasm. It carries out the reaction L-citrulline + L-aspartate + ATP = 2-(N(omega)-L-arginino)succinate + AMP + diphosphate + H(+). It functions in the pathway amino-acid biosynthesis; L-arginine biosynthesis; L-arginine from L-ornithine and carbamoyl phosphate: step 2/3. The polypeptide is Argininosuccinate synthase (Histophilus somni (strain 2336) (Haemophilus somnus)).